We begin with the raw amino-acid sequence, 219 residues long: MSRISKAEMSKLLSVYFIMGSNNCTKDPLQVLREALEGGITIFQFREKGEGALTGEERICFAKELQAICKEYGVPFIVNDDVELALELDADGVHVGQDDEGITSVREKMGDKIVGVSTHTIEEARWAIENGADYLGVGPIFPTSTKKDTKAVQGTKGLAHFREQGITIPIVGIGGISIENTASVIEAGADGVSVISAISLAESAYESTKKLVEEVSRSL.

4-amino-2-methyl-5-(diphosphooxymethyl)pyrimidine-binding positions include Gln44 to Lys48 and Asn79. Mg(2+) is bound by residues Asp80 and Asp99. 4-amino-2-methyl-5-(diphosphooxymethyl)pyrimidine is bound at residue Ser117. Thr143–Thr145 provides a ligand contact to 2-[(2R,5Z)-2-carboxy-4-methylthiazol-5(2H)-ylidene]ethyl phosphate. A 4-amino-2-methyl-5-(diphosphooxymethyl)pyrimidine-binding site is contributed by Lys146. 2-[(2R,5Z)-2-carboxy-4-methylthiazol-5(2H)-ylidene]ethyl phosphate is bound by residues Gly175 and Ile195 to Ser196.

This sequence belongs to the thiamine-phosphate synthase family. Mg(2+) is required as a cofactor.

It catalyses the reaction 2-[(2R,5Z)-2-carboxy-4-methylthiazol-5(2H)-ylidene]ethyl phosphate + 4-amino-2-methyl-5-(diphosphooxymethyl)pyrimidine + 2 H(+) = thiamine phosphate + CO2 + diphosphate. It carries out the reaction 2-(2-carboxy-4-methylthiazol-5-yl)ethyl phosphate + 4-amino-2-methyl-5-(diphosphooxymethyl)pyrimidine + 2 H(+) = thiamine phosphate + CO2 + diphosphate. The catalysed reaction is 4-methyl-5-(2-phosphooxyethyl)-thiazole + 4-amino-2-methyl-5-(diphosphooxymethyl)pyrimidine + H(+) = thiamine phosphate + diphosphate. It participates in cofactor biosynthesis; thiamine diphosphate biosynthesis; thiamine phosphate from 4-amino-2-methyl-5-diphosphomethylpyrimidine and 4-methyl-5-(2-phosphoethyl)-thiazole: step 1/1. Condenses 4-methyl-5-(beta-hydroxyethyl)thiazole monophosphate (THZ-P) and 2-methyl-4-amino-5-hydroxymethyl pyrimidine pyrophosphate (HMP-PP) to form thiamine monophosphate (TMP). In Bacillus cereus (strain AH820), this protein is Thiamine-phosphate synthase.